The sequence spans 103 residues: Small ribosomal subunit protein uS10 (103 aa).

The protein belongs to the universal ribosomal protein uS10 family. Part of the 30S ribosomal subunit.

In terms of biological role, involved in the binding of tRNA to the ribosomes. This Rubrobacter xylanophilus (strain DSM 9941 / JCM 11954 / NBRC 16129 / PRD-1) protein is Small ribosomal subunit protein uS10.